Here is a 380-residue protein sequence, read N- to C-terminus: Protein-tyrosine sulfotransferase A (380 aa).

Residues 1-6 (MRKNRE) lie on the Cytoplasmic side of the membrane. The helical; Signal-anchor for type II membrane protein transmembrane segment at 7–27 (LLLVLFLVVFILFYFITARTA) threads the bilayer. At 28 to 380 (DDPYYSNHRE…PIVDNEVSKL (353 aa)) the chain is on the lumenal side. An N-linked (GlcNAc...) asparagine glycan is attached at N66. 79 to 83 (RSGTT) serves as a coordination point for 3'-phosphoadenylyl sulfate. A disulfide bond links C97 and C157. The active-site Proton donor/acceptor is the E100. Residues 102–106 (RVIPR) form an interaction with peptide substrate region. Residues R184, S192, and R196 each coordinate 3'-phosphoadenylyl sulfate. A disulfide bridge links C226 with C234. 3'-phosphoadenylyl sulfate-binding positions include Y239, 284–293 (SSDQVVKPVN), and K299.

This sequence belongs to the protein sulfotransferase family.

The protein resides in the golgi apparatus membrane. It carries out the reaction L-tyrosyl-[protein] + 3'-phosphoadenylyl sulfate = O-sulfo-L-tyrosine-[protein] + adenosine 3',5'-bisphosphate + H(+). In terms of biological role, catalyzes the O-sulfation of tyrosine residues within acidic motifs of polypeptides, using 3'-phosphoadenylyl sulfate (PAPS) as cosubstrate. This chain is Protein-tyrosine sulfotransferase A (tpst-1), found in Caenorhabditis elegans.